The sequence spans 397 residues: Serpin B10 (397 aa).

Positions 74 to 77 match the Nuclear localization signal motif; the sequence is KKRK.

The protein belongs to the serpin family. Ov-serpin subfamily.

It is found in the nucleus. It localises to the cytoplasm. Protease inhibitor that may play a role in the regulation of protease activities during hematopoiesis and apoptosis induced by TNF. May regulate protease activities in the cytoplasm and in the nucleus. The protein is Serpin B10 (Serpinb10) of Mus musculus (Mouse).